The following is a 428-amino-acid chain: Adenylosuccinate synthetase (428 aa).

Residues 12–18 (GDEGKGK) and 40–42 (GHT) contribute to the GTP site. Aspartate 13 acts as the Proton acceptor in catalysis. Positions 13 and 40 each coordinate Mg(2+). Residues 13–16 (DEGK), 38–41 (NAGH), threonine 128, arginine 142, glutamine 223, threonine 238, and arginine 302 each bind IMP. The active-site Proton donor is histidine 41. 298–304 (TTTGRPR) contacts substrate. Residues arginine 304, 330 to 332 (SID), and 412 to 414 (SVG) contribute to the GTP site.

Belongs to the adenylosuccinate synthetase family. As to quaternary structure, homodimer. Mg(2+) serves as cofactor.

It localises to the cytoplasm. The enzyme catalyses IMP + L-aspartate + GTP = N(6)-(1,2-dicarboxyethyl)-AMP + GDP + phosphate + 2 H(+). The protein operates within purine metabolism; AMP biosynthesis via de novo pathway; AMP from IMP: step 1/2. Its function is as follows. Plays an important role in the de novo pathway of purine nucleotide biosynthesis. Catalyzes the first committed step in the biosynthesis of AMP from IMP. The sequence is that of Adenylosuccinate synthetase from Geobacillus sp. (strain WCH70).